The sequence spans 157 residues: Cell number regulator 10 (157 aa).

The next 2 membrane-spanning stretches (helical) occupy residues 41 to 57 (DCGL…ITFG) and 66 to 83 (GATS…LAYF).

This sequence belongs to the cornifelin family. In terms of tissue distribution, expressed in roots, leaves, stalks, immature ears and silks.

The protein localises to the membrane. The sequence is that of Cell number regulator 10 (CNR10) from Zea mays (Maize).